The primary structure comprises 395 residues: F-box protein At5g46170 (395 aa).

The F-box domain occupies 24 to 72 (IDHFDHLPDSILLLVFNKIGDVKALGRCCVVSRRFHSLVPQVDNVVVRV). A disordered region spans residues 122–158 (TKRSSSSCGGSGSSSSSLSISGDDDGGEIEQGGVTHH). Low complexity predominate over residues 125 to 142 (SSSSCGGSGSSSSSLSIS).

This is F-box protein At5g46170 from Arabidopsis thaliana (Mouse-ear cress).